The sequence spans 331 residues: Inactive serine/threonine-protein kinase BKN1 (331 aa).

A lipid anchor (N-myristoyl glycine) is attached at G2. The S-palmitoyl cysteine moiety is linked to residue C4. The Protein kinase domain occupies 58 to 328; sequence DYSVRKFYKG…VLDGLNHIAE (271 aa).

It belongs to the protein kinase superfamily. Ser/Thr protein kinase family. As to expression, restricted to stigma in flowers.

It localises to the cell membrane. It is found in the nucleus. Collaboratively with BKN2/SZE2, involved in compatible pollen-stigma interactions. This Arabidopsis thaliana (Mouse-ear cress) protein is Inactive serine/threonine-protein kinase BKN1.